We begin with the raw amino-acid sequence, 695 residues long: Tripartite terminase subunit 1 (695 aa).

The C3H1-type zinc-finger motif lies at 182 to 210; it reads CLECLQEVCLTPNQGTSLQAMLPDTACSH. Residue 621-628 coordinates ATP; it reads YNRTWERE.

This sequence belongs to the herpesviridae TRM1 protein family. As to quaternary structure, associates with TRM2 and TRM3 to form the tripartite terminase complex. Interacts with portal protein.

It localises to the host nucleus. Its function is as follows. Component of the molecular motor that translocates viral genomic DNA in empty capsid during DNA packaging. Forms a tripartite terminase complex together with TRM2 and TRM3 in the host cytoplasm. Once the complex reaches the host nucleus, it interacts with the capsid portal vertex. This portal forms a ring in which genomic DNA is translocated into the capsid. TRM1 carries an endonuclease activity that plays an important role for the cleavage of concatemeric viral DNA into unit length genomes. The protein is Tripartite terminase subunit 1 of Homo sapiens (Human).